We begin with the raw amino-acid sequence, 214 residues long: GTP cyclohydrolase 1 (214 aa).

Residues C108, H111, and C179 each coordinate Zn(2+).

This sequence belongs to the GTP cyclohydrolase I family. Toroid-shaped homodecamer, composed of two pentamers of five dimers.

The enzyme catalyses GTP + H2O = 7,8-dihydroneopterin 3'-triphosphate + formate + H(+). The protein operates within cofactor biosynthesis; 7,8-dihydroneopterin triphosphate biosynthesis; 7,8-dihydroneopterin triphosphate from GTP: step 1/1. The sequence is that of GTP cyclohydrolase 1 from Shewanella putrefaciens (strain CN-32 / ATCC BAA-453).